The following is a 173-amino-acid chain: Protein tyrosine phosphatase type IVA 1 (173 aa).

Residues 8–161 (APVEVTYKNM…YRPKMRLRFK (154 aa)) form the Tyrosine-protein phosphatase domain. A disulfide bond links cysteine 49 and cysteine 104. The Proton donor role is filled by aspartate 72. Residues 97-132 (GCCIAVHCVAGLGRAPVLVALALIEGGMKYEDAVQF) form an interaction with ATF5 region. The active-site Phosphocysteine intermediate is cysteine 104. Phosphate is bound at residue 105-110 (VAGLGR). Arginine 110 contributes to the substrate binding site. Cysteine 170 is modified (cysteine methyl ester). Residue cysteine 170 is the site of S-farnesyl cysteine attachment. The propeptide at 171–173 (CIQ) is removed in mature form.

Belongs to the protein-tyrosine phosphatase family. In terms of assembly, homotrimer. Interacts with ATF5 and tubulin. In terms of processing, farnesylated. Farnesylation is required for membrane targeting.

It is found in the cell membrane. The protein resides in the early endosome. The protein localises to the endoplasmic reticulum. It localises to the cytoplasm. Its subcellular location is the cytoskeleton. It is found in the spindle. The protein resides in the nucleus. It catalyses the reaction O-phospho-L-tyrosyl-[protein] + H2O = L-tyrosyl-[protein] + phosphate. Its activity is regulated as follows. Inhibited by sodium orthovanadate and pentamidine. In terms of biological role, protein tyrosine phosphatase which stimulates progression from G1 into S phase during mitosis. May play a role in the development and maintenance of differentiating epithelial tissues. This is Protein tyrosine phosphatase type IVA 1 (PTP4A1) from Pongo abelii (Sumatran orangutan).